Reading from the N-terminus, the 69-residue chain is U2-agatoxin-Ao1z (69 aa).

A signal peptide spans 1–20; the sequence is MRAIISLLLISAMVFSMIEA. A propeptide spanning residues 21–34 is cleaved from the precursor; that stretch reads VPVEEGLQLFEGER. Intrachain disulfides connect Cys37-Cys53, Cys44-Cys58, and Cys52-Cys68.

The protein belongs to the neurotoxin 01 (U2-agtx) family. As to expression, expressed by the venom gland.

The protein localises to the secreted. Functionally, insect active toxin causing rapid but reversible paralysis in crickets. No activity shown in mammals. Does not show effect on mammalian voltage-gated calcium channels. The chain is U2-agatoxin-Ao1z from Agelena orientalis (Funnel-web spider).